The chain runs to 871 residues: Patatin-like phospholipase domain-containing protein CNBE2340 (871 aa).

The disordered stretch occupies residues 20–53 (NEDSPLSPRSFSLPPESPQLSTASPIHQRVSRKR). Over residues 23-33 (SPLSPRSFSLP) the composition is skewed to low complexity. A helical membrane pass occupies residues 68 to 88 (WPLLFFIFFIIYLEFSAYVIT). One can recognise a PNPLA domain in the interval 243–435 (LCLSGGASFG…REDIPLGSLH (193 aa)). The GXSXG signature appears at 274–278 (GTSAG). Serine 276 (nucleophile) is an active-site residue. Catalysis depends on aspartate 422, which acts as the Proton acceptor. Disordered stretches follow at residues 586–707 (ALSH…NFGD), 720–748 (LSSP…QRFR), and 760–871 (VSES…QDGA). 2 stretches are compositionally biased toward polar residues: residues 594 to 606 (NDPA…TNPE) and 687 to 706 (PTHS…SNFG). The segment covering 721–748 (SSPFRSIRSNTSSSSNNVQSPSSSQRFR) has biased composition (low complexity). The span at 798-820 (VESHSDRSEDEMLHSGANVKEEY) shows a compositional bias: basic and acidic residues.

It belongs to the PLPL family.

The protein localises to the membrane. Functionally, probable lipid hydrolase. The chain is Patatin-like phospholipase domain-containing protein CNBE2340 from Cryptococcus neoformans var. neoformans serotype D (strain B-3501A) (Filobasidiella neoformans).